Reading from the N-terminus, the 507-residue chain is Glucose-6-phosphate 1-dehydrogenase (507 aa).

Residues Arg57 and Lys168 each coordinate NADP(+). Residues His198, Lys202, Glu236, and Asp255 each contribute to the substrate site. His260 functions as the Proton acceptor in the catalytic mechanism. Lys356 is a substrate binding site.

This sequence belongs to the glucose-6-phosphate dehydrogenase family.

It catalyses the reaction D-glucose 6-phosphate + NADP(+) = 6-phospho-D-glucono-1,5-lactone + NADPH + H(+). It functions in the pathway carbohydrate degradation; pentose phosphate pathway; D-ribulose 5-phosphate from D-glucose 6-phosphate (oxidative stage): step 1/3. Functionally, catalyzes the oxidation of glucose 6-phosphate to 6-phosphogluconolactone. The protein is Glucose-6-phosphate 1-dehydrogenase of Chlamydia muridarum (strain MoPn / Nigg).